Consider the following 452-residue polypeptide: Mitochondrial distribution and morphology protein 10 (452 aa).

Belongs to the MDM10 family. In terms of assembly, component of the ER-mitochondria encounter structure (ERMES) or MDM complex, composed of MMM1, MDM10, MDM12 and MDM34. Associates with the mitochondrial outer membrane sorting assembly machinery SAM(core) complex.

Its subcellular location is the mitochondrion outer membrane. Its function is as follows. Component of the ERMES/MDM complex, which serves as a molecular tether to connect the endoplasmic reticulum and mitochondria. Components of this complex are involved in the control of mitochondrial shape and protein biogenesis and may function in phospholipid exchange. MDM10 is involved in the late assembly steps of the general translocase of the mitochondrial outer membrane (TOM complex). Functions in the TOM40-specific route of the assembly of outer membrane beta-barrel proteins, including the association of TOM40 with the receptor TOM22 and small TOM proteins. Can associate with the SAM(core) complex as well as the MDM12-MMM1 complex, both involved in late steps of the major beta-barrel assembly pathway, that is responsible for biogenesis of all outer membrane beta-barrel proteins. May act as a switch that shuttles between both complexes and channels precursor proteins into the TOM40-specific pathway. Plays a role in mitochondrial morphology and in the inheritance of mitochondria. This is Mitochondrial distribution and morphology protein 10 from Kluyveromyces lactis (strain ATCC 8585 / CBS 2359 / DSM 70799 / NBRC 1267 / NRRL Y-1140 / WM37) (Yeast).